The following is a 97-amino-acid chain: Aspartyl/glutamyl-tRNA(Asn/Gln) amidotransferase subunit C (97 aa).

Belongs to the GatC family. As to quaternary structure, heterotrimer of A, B and C subunits.

It carries out the reaction L-glutamyl-tRNA(Gln) + L-glutamine + ATP + H2O = L-glutaminyl-tRNA(Gln) + L-glutamate + ADP + phosphate + H(+). The catalysed reaction is L-aspartyl-tRNA(Asn) + L-glutamine + ATP + H2O = L-asparaginyl-tRNA(Asn) + L-glutamate + ADP + phosphate + 2 H(+). Its function is as follows. Allows the formation of correctly charged Asn-tRNA(Asn) or Gln-tRNA(Gln) through the transamidation of misacylated Asp-tRNA(Asn) or Glu-tRNA(Gln) in organisms which lack either or both of asparaginyl-tRNA or glutaminyl-tRNA synthetases. The reaction takes place in the presence of glutamine and ATP through an activated phospho-Asp-tRNA(Asn) or phospho-Glu-tRNA(Gln). The sequence is that of Aspartyl/glutamyl-tRNA(Asn/Gln) amidotransferase subunit C from Prochlorococcus marinus (strain MIT 9211).